Consider the following 153-residue polypeptide: Catabolic 3-dehydroquinase (153 aa).

Tyr-24 acts as the Proton acceptor in catalysis. Substrate contacts are provided by Asn-75, His-81, and Asp-88. His-101 serves as the catalytic Proton donor. Residues 102-103 and Arg-112 each bind substrate; that span reads VS.

This sequence belongs to the type-II 3-dehydroquinase family. Homododecamer. Adopts a ring-like structure, composed of an arrangement of two hexameric rings stacked on top of one another.

It carries out the reaction 3-dehydroquinate = 3-dehydroshikimate + H2O. It participates in aromatic compound metabolism; 3,4-dihydroxybenzoate biosynthesis; 3,4-dihydroxybenzoate from 3-dehydroquinate: step 1/2. Is involved in the catabolism of quinate. Allows the utilization of quinate as carbon source via the beta-ketoadipate pathway. This is Catabolic 3-dehydroquinase from Aspergillus oryzae (strain ATCC 42149 / RIB 40) (Yellow koji mold).